A 313-amino-acid chain; its full sequence is uncharacterized protein (313 aa).

The next 6 membrane-spanning stretches (helical) occupy residues 16-36 (AGTWVMIGILGLTMVGFAFLA), 106-126 (FTILTGLFTIIIAAGIVANEF), 155-175 (FGLLLLLILFIGSTLLGLIFF), 208-228 (LSESVSALMVATMAFMLSAVF), 233-253 (LAVGFSIFLLVAGTTATAFIA), and 286-306 (FSLVMLAIYFIIFLLLAFGIF).

The protein resides in the cell membrane. This is an uncharacterized protein from Bacillus subtilis (strain 168).